Reading from the N-terminus, the 465-residue chain is tRNA modification GTPase MnmE (465 aa).

(6S)-5-formyl-5,6,7,8-tetrahydrofolate contacts are provided by Arg30, Glu92, and Arg132. The 162-residue stretch at 227-388 folds into the TrmE-type G domain; it reads GLQVALVGRP…LIEAVLKTCG (162 aa). A K(+)-binding site is contributed by Asn237. GTP-binding positions include 237–242, 256–262, 281–284, and 342–345; these read NVGKSS, TDLPGTT, DTAG, and NKAD. A Mg(2+)-binding site is contributed by Ser241. Residues Thr256, Leu258, and Thr261 each coordinate K(+). Residue Thr262 participates in Mg(2+) binding. Lys465 contacts (6S)-5-formyl-5,6,7,8-tetrahydrofolate.

It belongs to the TRAFAC class TrmE-Era-EngA-EngB-Septin-like GTPase superfamily. TrmE GTPase family. Homodimer. Heterotetramer of two MnmE and two MnmG subunits. K(+) serves as cofactor.

The protein localises to the cytoplasm. Functionally, exhibits a very high intrinsic GTPase hydrolysis rate. Involved in the addition of a carboxymethylaminomethyl (cmnm) group at the wobble position (U34) of certain tRNAs, forming tRNA-cmnm(5)s(2)U34. The sequence is that of tRNA modification GTPase MnmE from Prochlorococcus marinus (strain MIT 9303).